A 145-amino-acid polypeptide reads, in one-letter code: 3-dehydroquinate dehydratase (145 aa).

The Proton acceptor role is filled by Tyr-23. 3 residues coordinate substrate: Asn-73, His-79, and Asp-86. His-99 (proton donor) is an active-site residue. Substrate contacts are provided by residues 100-101 (LS) and Arg-110.

This sequence belongs to the type-II 3-dehydroquinase family. In terms of assembly, homododecamer.

It catalyses the reaction 3-dehydroquinate = 3-dehydroshikimate + H2O. It participates in metabolic intermediate biosynthesis; chorismate biosynthesis; chorismate from D-erythrose 4-phosphate and phosphoenolpyruvate: step 3/7. Its function is as follows. Catalyzes a trans-dehydration via an enolate intermediate. This is 3-dehydroquinate dehydratase from Desulfitobacterium hafniense (strain Y51).